The following is a 1036-amino-acid chain: Lethal(2) giant larvae protein homolog 1 (1036 aa).

WD repeat units follow at residues 38–71, 78–119, 139–175, 199–233, 239–271, 289–331, 339–373, 395–473, 517–592, and 601–662; these read SALA…FTGL, VTQM…GLSF, VTVV…GQTL, SLQG…DNVF, LESL…GSPP, AINK…ETLV, VIDF…VLDL, TCSA…YKLS, QKVA…RMLI, and TAVT…LRQS. A Phosphoserine modification is found at Ser662. The segment covering 667–677 has biased composition (basic residues); the sequence is RKSRVSGKKRT. The tract at residues 667–688 is disordered; sequence RKSRVSGKKRTPAASSKLQEAN. A compositionally biased stretch (polar residues) spans 679–688; the sequence is AASSKLQEAN. 4 WD repeats span residues 722-782, 791-843, 848-901, and 915-938; these read VRCL…KEVQ, AIAV…VSAK, LTAH…VHYS, and VFTR…SLSA. Thr957 bears the Phosphothreonine mark. A phosphoserine mark is found at Ser964, Ser982, and Ser989. The segment at 980-1002 is disordered; the sequence is PESCEGSPSSAHSKRADTMEPPE.

The protein belongs to the WD repeat L(2)GL family. In terms of assembly, associated with nonmuscle myosin II heavy chain. Interacts with PRKCI/aPKC, PARD6B/Par-6 and PARD6A. Interacts with STX4A. Interacts with RAB10 (GDP-bound form); the interaction is direct and promotes RAB10 association with membranes and activation through competition with the Rab inhibitor GDI1. Interacts with DCAF1. Post-translationally, phosphorylated by PRKCI on at least one of the following Ser residues: Ser 654, Ser-658, Ser-662, Ser-669 and Ser-672. Phosphorylation is important for appropriated cell polarization.

The protein resides in the early endosome membrane. Its subcellular location is the golgi apparatus. It localises to the trans-Golgi network membrane. The protein localises to the golgi apparatus membrane. It is found in the cell projection. The protein resides in the axon. Its subcellular location is the cytoplasm. It localises to the cytoskeleton. In terms of biological role, cortical cytoskeleton protein found in a complex involved in maintaining cell polarity and epithelial integrity. Involved in the regulation of mitotic spindle orientation, proliferation, differentiation and tissue organization of neuroepithelial cells. Involved in axonogenesis through RAB10 activation thereby regulating vesicular membrane trafficking toward the axonal plasma membrane. This chain is Lethal(2) giant larvae protein homolog 1 (Llgl1), found in Mus musculus (Mouse).